A 1180-amino-acid chain; its full sequence is Tudor domain-containing protein 1 (1180 aa).

Disordered regions lie at residues 1–66 (MSVK…KKNN) and 79–138 (SQED…RPAK). Residues 27-41 (NFEKNENKLPPHESL) show a composition bias toward basic and acidic residues. Composition is skewed to polar residues over residues 79–91 (SQEDNSVSSNPNG) and 110–122 (NSVSPPSAESNSP). Zn(2+) is bound by residues C170, C173, C181, C184, C190, C194, H202, and C206. An MYND-type zinc finger spans residues 170-206 (CHRCGLFGSLRCSQCKQTYYCSTACQRRDWSAHSIVC). A Tudor 1 domain is found at 312–372 (IPVKGEVCIA…YHLNRNIDLF (61 aa)). Residues 450 to 469 (SGQDSKKENADQSDPEDVGK) are disordered. Tudor domains follow at residues 541–600 (YPAI…LLEL), 762–821 (KAEI…FLNL), and 990–1048 (RPRI…HLAL).

The protein belongs to the TDRD1 family. As to quaternary structure, found in a mRNP complex, at least composed of TDRD1, TDRD6, TDRD7 and DDX4. Interacts with MAEL. Interacts with PIWIL1, PIWIL2 and PIWIL4 (when methylated on arginine residues). Interacts with TDRD12. As to expression, testis and ovary specific. Also expressed in several cancers.

The protein localises to the cytoplasm. In terms of biological role, plays a central role during spermatogenesis by participating in the repression transposable elements and preventing their mobilization, which is essential for the germline integrity. Acts via the piRNA metabolic process, which mediates the repression of transposable elements during meiosis by forming complexes composed of piRNAs and Piwi proteins and governs the methylation and subsequent repression of transposons. Required for the localization of Piwi proteins to the meiotic nuage. Involved in the piRNA metabolic process by ensuring the entry of correct transcripts into the normal piRNA pool and limiting the entry of cellular transcripts into the piRNA pathway. May act by allowing the recruitment of piRNA biogenesis or loading factors that ensure the correct entry of transcripts and piRNAs into Piwi proteins. This Homo sapiens (Human) protein is Tudor domain-containing protein 1 (TDRD1).